A 302-amino-acid chain; its full sequence is Sulfate adenylyltransferase subunit 2 (302 aa).

Residues 280–302 form a disordered region; that stretch reads RQGRAIDHDQSGSMELKKRQGYF.

Belongs to the PAPS reductase family. CysD subfamily. Heterodimer composed of CysD, the smaller subunit, and CysN.

The enzyme catalyses sulfate + ATP + H(+) = adenosine 5'-phosphosulfate + diphosphate. It functions in the pathway sulfur metabolism; hydrogen sulfide biosynthesis; sulfite from sulfate: step 1/3. Its function is as follows. With CysN forms the ATP sulfurylase (ATPS) that catalyzes the adenylation of sulfate producing adenosine 5'-phosphosulfate (APS) and diphosphate, the first enzymatic step in sulfur assimilation pathway. APS synthesis involves the formation of a high-energy phosphoric-sulfuric acid anhydride bond driven by GTP hydrolysis by CysN coupled to ATP hydrolysis by CysD. The sequence is that of Sulfate adenylyltransferase subunit 2 from Vibrio cholerae serotype O1 (strain ATCC 39315 / El Tor Inaba N16961).